The following is a 312-amino-acid chain: Small ribosomal subunit biogenesis GTPase RsgA (312 aa).

The CP-type G domain occupies 86–245; it reads QSFLKRPAVA…LADTPGFNRP (160 aa). GTP is bound by residues 135-138 and 187-195; these read TKID and GPSGVGKTS. Residues C270, C275, H277, and C283 each contribute to the Zn(2+) site.

It belongs to the TRAFAC class YlqF/YawG GTPase family. RsgA subfamily. In terms of assembly, monomer. Associates with 30S ribosomal subunit, binds 16S rRNA. Requires Zn(2+) as cofactor.

Its subcellular location is the cytoplasm. In terms of biological role, one of several proteins that assist in the late maturation steps of the functional core of the 30S ribosomal subunit. Helps release RbfA from mature subunits. May play a role in the assembly of ribosomal proteins into the subunit. Circularly permuted GTPase that catalyzes slow GTP hydrolysis, GTPase activity is stimulated by the 30S ribosomal subunit. The chain is Small ribosomal subunit biogenesis GTPase RsgA from Prochlorococcus marinus (strain NATL2A).